Consider the following 276-residue polypeptide: Eukaryotic translation initiation factor 3 subunit G-2 (276 aa).

In terms of domain architecture, RRM spans 196–274 (SAVRISNLSE…LILCVEWSKP (79 aa)).

The protein belongs to the eIF-3 subunit G family. In terms of assembly, component of the eukaryotic translation initiation factor 3 (eIF-3) complex. The eIF-3 complex interacts with pix.

The protein resides in the cytoplasm. RNA-binding component of the eukaryotic translation initiation factor 3 (eIF-3) complex, which is involved in protein synthesis of a specialized repertoire of mRNAs and, together with other initiation factors, stimulates binding of mRNA and methionyl-tRNAi to the 40S ribosome. The eIF-3 complex specifically targets and initiates translation of a subset of mRNAs involved in cell proliferation. This subunit can bind 18S rRNA. This chain is Eukaryotic translation initiation factor 3 subunit G-2, found in Drosophila persimilis (Fruit fly).